The sequence spans 698 residues: MSKSSPIEPVSASDVSQQFRDPGLYLNRELSQLDFNFRVLAQALDEQVPLLERLRFLCISCTNLDEFFEIRVATVRHAQEFGLPPAPDGMRPTVILNAVHDLTTKLVHDQYNCWNQVLCPALASLGVGVLSHNSWNVRQKRWLRGYFRNEIMPVLSPLGLDPAHPFPKIFNKTLNIVVVLNGIDAFGRAGHLAIVRAPRSLPRIIELPQHLSRDGSQNFVFLSSVLSAFVGELFPGMVVKGAYQFRVTRNSELVVDEDEVENLALALRNELVTRGYRLAVRLEIAEDCPIPIVRTLLQNFGLQENAVYRINGPVNLSRVSQVYDMVLRPELKYPPFNPRTVRNSDHIFEIIAKGDVLLYHPYDAFTAVLDLLRQAAADPDVLAIKQTLYRTGKDSTIVDALIQAARSGKDVTVVVELRARFDEEANLGLADKLQEAGVQVVYGVVGYKTHAKMLLIVRREGRKLRRYVHLGTGNYHSGTARIYTDLSLMTANAAIGKDVHQLFLQLSGLAPKMKLECLLQSPFTLHAGVLFRIERETTFARKGCPARIVAKMNALNEPQVVRALYVASQAGVQIDLIVRGACTLRPGVQGISENIRVRSIVGRFLEHSRVYWFANNGTPELFCASADWLERNLLRRVEICFPILNPDLAKRIYSDVLQSYLDDNLNAWELGSDGVYRKLLPETDHAPYSAQAALLESL.

N63 is a binding site for ATP. Mg(2+) contacts are provided by R390 and R420. H450 serves as the catalytic Phosphohistidine intermediate. Y483, R579, and H607 together coordinate ATP.

Belongs to the polyphosphate kinase 1 (PPK1) family. The cofactor is Mg(2+). Post-translationally, an intermediate of this reaction is the autophosphorylated ppk in which a phosphate is covalently linked to a histidine residue through a N-P bond.

It carries out the reaction [phosphate](n) + ATP = [phosphate](n+1) + ADP. In terms of biological role, catalyzes the reversible transfer of the terminal phosphate of ATP to form a long-chain polyphosphate (polyP). The protein is Polyphosphate kinase of Xylella fastidiosa (strain Temecula1 / ATCC 700964).